The sequence spans 463 residues: Cysteine--tRNA ligase (463 aa).

Cys-29 contacts Zn(2+). The 'HIGH' region signature appears at 31-41; the sequence is PTVYDFAHIGN. Zn(2+)-binding residues include Cys-227, His-252, and Glu-256. Residues 285-289 carry the 'KMSKS' region motif; sequence KMSKS. Position 288 (Lys-288) interacts with ATP.

Belongs to the class-I aminoacyl-tRNA synthetase family. Monomer. The cofactor is Zn(2+).

The protein localises to the cytoplasm. The catalysed reaction is tRNA(Cys) + L-cysteine + ATP = L-cysteinyl-tRNA(Cys) + AMP + diphosphate. This Rhodopseudomonas palustris (strain BisB5) protein is Cysteine--tRNA ligase.